Here is a 115-residue protein sequence, read N- to C-terminus: DNA-binding protein Ta0052 (115 aa).

Residues methionine 1–arginine 41 are disordered. Low complexity predominate over residues leucine 15 to glutamate 25. Positions glutamine 26–arginine 41 are enriched in basic and acidic residues.

The protein belongs to the PDCD5 family.

This Thermoplasma acidophilum (strain ATCC 25905 / DSM 1728 / JCM 9062 / NBRC 15155 / AMRC-C165) protein is DNA-binding protein Ta0052.